The sequence spans 243 residues: Carboxy-S-adenosyl-L-methionine synthase (243 aa).

S-adenosyl-L-methionine-binding positions include tyrosine 39, 64–66 (GCS), 90–91 (DN), 118–119 (DL), asparagine 133, and arginine 200.

The protein belongs to the class I-like SAM-binding methyltransferase superfamily. Cx-SAM synthase family. In terms of assembly, homodimer.

It catalyses the reaction prephenate + S-adenosyl-L-methionine = carboxy-S-adenosyl-L-methionine + 3-phenylpyruvate + H2O. Functionally, catalyzes the conversion of S-adenosyl-L-methionine (SAM) to carboxy-S-adenosyl-L-methionine (Cx-SAM). This Idiomarina loihiensis (strain ATCC BAA-735 / DSM 15497 / L2-TR) protein is Carboxy-S-adenosyl-L-methionine synthase.